The chain runs to 309 residues: Taste receptor type 2 member 20 (309 aa).

At 1 to 6 (MMSFLH) the chain is on the extracellular side. The chain crosses the membrane as a helical span at residues 7-27 (IVFSILVVVAFILGNFANGFI). Topologically, residues 28 to 46 (ALINFIAWVKRQKISSADQ) are cytoplasmic. The helical transmembrane segment at 47 to 67 (IIAALAVSRVGLLWVILLHWY) threads the bilayer. The Extracellular segment spans residues 68–79 (STVLNPTSSNLK). A helical transmembrane segment spans residues 80–100 (VIIFISNAWAVTNHFSIWLAT). The Cytoplasmic segment spans residues 101–125 (SLSIFYLLKIVNFSRLIFHHLKRKA). Residues 126 to 146 (KSVVLVIVLGSLFFLVCXLVM) form a helical membrane-spanning segment. The Extracellular segment spans residues 147-178 (KNTYINVWTEECEGNVTWKIKLRNAMHLSNLT). A helical transmembrane segment spans residues 179–199 (VAMLANLIPFTLTLISFLLLI). At 200–229 (YSLCKHLKKMQLHGKGSQDPSTKIHIKALQ) the chain is on the cytoplasmic side. The helical transmembrane segment at 230–250 (TVTSFLILLAIYFLCLITSFW) threads the bilayer. The Extracellular portion of the chain corresponds to 251–259 (NSKMRPKEI). A helical transmembrane segment spans residues 260 to 280 (VLMLCQAFGIIYPSFHSFILI). Residues 281–309 (WGNKTLKQTFLSVLWQVTCWAKGQNQSTP) are Cytoplasmic-facing.

The protein belongs to the G-protein coupled receptor T2R family.

It is found in the membrane. Functionally, receptor that may play a role in the perception of bitterness and is gustducin-linked. May play a role in sensing the chemical composition of the gastrointestinal content. The activity of this receptor may stimulate alpha gustducin, mediate PLC-beta-2 activation and lead to the gating of TRPM5. The sequence is that of Taste receptor type 2 member 20 (TAS2R20) from Pan troglodytes (Chimpanzee).